Reading from the N-terminus, the 479-residue chain is Carbohydrate sulfotransferase 3 (479 aa).

At 1 to 20 (MEKGLTLPQDCRDFVHSLKM) the chain is on the cytoplasmic side. The chain crosses the membrane as a helical; Signal-anchor for type II membrane protein span at residues 21-38 (RSKYALFLVFVVIVFVFI). Residues 39–479 (EKENKIISRV…LEERGTFWVT (441 aa)) lie on the Lumenal side of the membrane. Residues N63, N74, and N96 are each glycosylated (N-linked (GlcNAc...) asparagine). A disordered region spans residues 108-128 (EAAGEEEEEQRKEEEPPRPAV). 3'-phosphoadenylyl sulfate is bound at residue 141–147 (TRTGSSF). N-linked (GlcNAc...) asparagine glycosylation is present at N256. 301 to 309 (RDPRAVLAS) contacts 3'-phosphoadenylyl sulfate. N-linked (GlcNAc...) asparagine glycosylation is found at N420 and N464.

The protein belongs to the sulfotransferase 1 family. Gal/GlcNAc/GalNAc subfamily. In terms of processing, N-glycosylated. As to expression, widely expressed in adult tissues. Expressed in heart, placenta, skeletal muscle and pancreas. Also expressed in various immune tissues such as spleen, lymph node, thymus and appendix.

It localises to the golgi apparatus membrane. It catalyses the reaction chondroitin beta-D-glucuronate + n 3'-phosphoadenylyl sulfate = chondroitin 6'-sulfate + n adenosine 3',5'-bisphosphate + n H(+). The enzyme catalyses 3'-phosphoadenylyl sulfate + keratan = adenosine 3',5'-bisphosphate + keratan 6'-sulfate.. Its function is as follows. Sulfotransferase that utilizes 3'-phospho-5'-adenylyl sulfate (PAPS) as sulfonate donor to catalyze the transfer of sulfate to position 6 of the N-acetylgalactosamine (GalNAc) residue of chondroitin. Chondroitin sulfate constitutes the predominant proteoglycan present in cartilage and is distributed on the surfaces of many cells and extracellular matrices. Catalyzes with a lower efficiency the sulfation of Gal residues of keratan sulfate, another glycosaminoglycan. Can also catalyze the sulfation of the Gal residues in sialyl N-acetyllactosamine (sialyl LacNAc) oligosaccharides. May play a role in the maintenance of naive T-lymphocytes in the spleen. The chain is Carbohydrate sulfotransferase 3 (CHST3) from Homo sapiens (Human).